Here is a 223-residue protein sequence, read N- to C-terminus: ATP-dependent dethiobiotin synthetase BioD (223 aa).

11–16 (DIGKTY) is an ATP binding site. A Mg(2+)-binding site is contributed by Thr15. Lys36 is a catalytic residue. Thr40 lines the substrate pocket. ATP is bound by residues Asp50, 110-113 (EGAG), and 174-175 (NN). Mg(2+)-binding residues include Asp50 and Glu110.

It belongs to the dethiobiotin synthetase family. As to quaternary structure, homodimer. Requires Mg(2+) as cofactor.

The protein localises to the cytoplasm. It carries out the reaction (7R,8S)-7,8-diammoniononanoate + CO2 + ATP = (4R,5S)-dethiobiotin + ADP + phosphate + 3 H(+). It functions in the pathway cofactor biosynthesis; biotin biosynthesis; biotin from 7,8-diaminononanoate: step 1/2. Its function is as follows. Catalyzes a mechanistically unusual reaction, the ATP-dependent insertion of CO2 between the N7 and N8 nitrogen atoms of 7,8-diaminopelargonic acid (DAPA, also called 7,8-diammoniononanoate) to form a ureido ring. This Staphylococcus epidermidis (strain ATCC 35984 / DSM 28319 / BCRC 17069 / CCUG 31568 / BM 3577 / RP62A) protein is ATP-dependent dethiobiotin synthetase BioD.